An 850-amino-acid polypeptide reads, in one-letter code: Receptor-like protein kinase ANXUR1 (850 aa).

The signal sequence occupies residues 1–26; the sequence is MSGKTRILFFLTCLSFLLVFPTRSNG. Residues 27-429 are Extracellular-facing; that stretch reads QDLALSCGTS…KKEFKNEKRH (403 aa). 5 N-linked (GlcNAc...) asparagine glycosylation sites follow: asparagine 114, asparagine 132, asparagine 292, asparagine 302, and asparagine 330. A helical transmembrane segment spans residues 430–450; it reads AFIIGSAGGVLAVLIGALCFT. Residues 451-850 lie on the Cytoplasmic side of the membrane; it reads AYKKKQGYQG…FSQIVNPKGR (400 aa). Residues 517-790 enclose the Protein kinase domain; sequence FDDSNVIGVG…GDVLWNLEFA (274 aa). Residues 523–531 and lysine 545 each bind ATP; that span reads IGVGGFGKV. The Proton acceptor role is filled by aspartate 641. The tract at residues 796–850 is disordered; that stretch reads TADGTRHRTPNNGGSSEDLGRGGMAVNVAGRDDVSDLSSEDNTEIFSQIVNPKGR. Over residues 839-850 the composition is skewed to polar residues; it reads EIFSQIVNPKGR.

This sequence belongs to the protein kinase superfamily. Ser/Thr protein kinase family. Expressed in pollen, but not in pistils or seedlings.

The protein resides in the cell membrane. The enzyme catalyses L-seryl-[protein] + ATP = O-phospho-L-seryl-[protein] + ADP + H(+). The catalysed reaction is L-threonyl-[protein] + ATP = O-phospho-L-threonyl-[protein] + ADP + H(+). In terms of biological role, receptor-like protein kinase that controls pollen tube behavior by directing rupture at proper timing to release the sperm cell. The protein is Receptor-like protein kinase ANXUR1 (ANX1) of Arabidopsis thaliana (Mouse-ear cress).